Here is a 519-residue protein sequence, read N- to C-terminus: S-type anion channel SLAH2 (519 aa).

Residues 1–31 (MNNPRSVSPLVSPANHSDLLENQRQSGSGDF) are disordered. Residues 1 to 140 (MNNPRSVSPL…LPEDKTWPFL (140 aa)) lie on the Cytoplasmic side of the membrane. A compositionally biased stretch (polar residues) spans 20–29 (LENQRQSGSG). A phosphoserine mark is found at S77 and S85. Residues 141–161 (LRFPITSYGMCLGVSSQAIMW) form a helical membrane-spanning segment. Residues 162–185 (KTLATTEAEKFLHVTQVINHVLWW) are Extracellular-facing. A helical transmembrane segment spans residues 186-206 (ISLLLLLAVSITYLFKTILFF). The Cytoplasmic segment spans residues 207–220 (EAVRREFRHPIRVN). The chain crosses the membrane as a helical span at residues 221 to 241 (FFFAPLISILFLALGIPHSII). Residues 242–247 (SHLPST) lie on the Extracellular side of the membrane. The helical transmembrane segment at 248–268 (LWYFLMAPILFLEMKIYGQWM) threads the bilayer. Residues 269–281 (SGGQRRLSKVANP) lie on the Cytoplasmic side of the membrane. The chain crosses the membrane as a helical span at residues 282–302 (TNHLSIVGNFAGALLGASMGL). Topologically, residues 303-304 (KE) are extracellular. Residues 305 to 325 (GPIFFFAIGLAYYLVLFVTLY) form a helical membrane-spanning segment. At 326–340 (QRLPTNETLPKELHP) the chain is on the cytoplasmic side. A helical transmembrane segment spans residues 341–361 (VFFLFVAAPAVASMAWTKISA). S362 is a topological domain (extracellular). Residues 363-383 (FDLGSRLAYFISLFLYFSLVC) traverse the membrane as a helical segment. The Cytoplasmic segment spans residues 384–389 (RINLFR). The chain crosses the membrane as a helical span at residues 390–410 (GFKFSLAWWAYTFPMTAVASA). Over 411 to 424 (TIKYSDEVTGVATK) the chain is Extracellular. The helical transmembrane segment at 425 to 445 (ILSVVMSGAATLTVIAVLGLT) threads the bilayer. Residues 446–519 (VMHAFVQRDL…VDSSTVQNSN (74 aa)) are Cytoplasmic-facing. The segment at 495-519 (PEDNQIDLESPPLVNVDSSTVQNSN) is disordered. The span at 510 to 519 (VDSSTVQNSN) shows a compositional bias: polar residues.

The protein belongs to the SLAC1 S-type anion channel family. Homotrimer. As to expression, expressed in lateral root primordia and tap root tips.

Its subcellular location is the cell membrane. Slow, weak voltage-dependent S-type anion efflux channel involved in maintenance of anion homeostasis. The polypeptide is S-type anion channel SLAH2 (SLAH2) (Arabidopsis thaliana (Mouse-ear cress)).